Reading from the N-terminus, the 413-residue chain is MTISYSGNVIRILLRWKGSIWRTAWKELLIYLILYYSVRVFYLKGIDLIDDDEDDRLKMRRMFETFCRQCDSYTRLIPLTFLLGFYVSNVVARWWRQFETLYWPEDILSVLCTVLHQHDEKSKRRRHTIARYLNLANALAWRDISSKIRLRFPSVHSLIESGLLTEKEYQILEAMHAENESSRWITPLHWIQLIMRQVEEEHKPTASLFNQFVGELRIFRQSLRKLYSYDWVCVPLVYTQVAALATYSFFFFTLFGRQPLFPDIETGKELDLVVPVFTIVQFLFFVGWFKVGQDLMRPFGLDDDDIELNYILDRNVRISFAIVNQLQESPIPDFESNDDKLWHEMHPPTKDGETSPIPRIPQLPHSKYSKQLSEHPPRLHAYVPIDDGKGSIKDLESHHGCVSLKKDKKHISW.

Helical transmembrane passes span 29 to 49 (LIYLILYYSVRVFYLKGIDLI), 72 to 92 (SYTRLIPLTFLLGFYVSNVVA), 236 to 256 (LVYTQVAALATYSFFFFTLFG), and 272 to 292 (LVVPVFTIVQFLFFVGWFKVG).

This sequence belongs to the anion channel-forming bestrophin (TC 1.A.46) family. Calcium-sensitive chloride channel subfamily. In terms of assembly, forms oligomers.

The protein resides in the cell membrane. Functionally, forms chloride channels. This Caenorhabditis elegans protein is Bestrophin homolog 13 (best-13).